The sequence spans 2190 residues: MNRAKPTTVRRPSAAAKPSGHPPPGDFIALGSKGQANESKTASTLLKPAPSGLPSERKRDAAAALSSASALTGLTKRPKLSSTPPLSALGRLAEAAVAEKRAISPSIKEPSVVPIEVLPTVLLDEIEAAELEGNDDRIEGVLCGAVKQLKVTRAKPDSTLYLSLMYLAKIKPNIFATEGVIEALCSLLRRDASINFKAKGNSLVSVLACNLLMAAYEEDENWPEIFVKVYIEDSLGERIWVDSPHCKTFVDNIQTAFNTRMPPRSVLLQGEAGRVAGDLGAGSSPHPSLTEEEDSQTELLIAEEKLSPEQEGQLMPRYEELAESVEEYVLDMLRDQLNRRQPIDNVSRNLLRLLTSTCGYKEVRLLAVQKLEMWLQNPKLTRPAQDLLMSVCMNCNTHGSEDMDVISHLIKIRLKPKVLLNHFMLCIRELLSAHKDNLGTTIKLVIFNELSSARNPNNMQVLYTALQHSSELAPKFLAMVFQDLLTNKDDYLRASRALLREIIKQTKHEINFQAFCLGLMQERKEPQYLEMEFKERFVVHITDVLAVSMMLGITAQVKEAGIAWDKGEKRNLEVLRSFQNQIAAIQRDAVWWLHTVVPSISKLAPKDYVHCLHKVLFTEQPETYYKWDNWPPESDRNFFLRLCSEVPILEDTLMRILVIGLSRELPLGPADAMELADHLVKRAAAVQADDVEVLKVGRTQLIDAVLNLCTYHHPENIQLPPGYQPPNLAISTLYWKAWPLLLVVAAFNPENIGLAAWEEYPTLKMLMEMVMTNNYSYPPCTLTDEETRTEMLNRELQTAQREKQEILAFEGHLAAASTKQTITESSSLLLSQLTSLDPQGPPRRPPPHILDQVKSLNQSLRLGHLLCRSRNPDFLLHIIQRQASSQSMPWLADLVQSSEGSLDVLPVQCLCEFLLHDAVDDAASGEEDDEGESKEQKAKKRQRQQKQRQLLGRLQDLLLGPKADEQTTCEVLDYFLRRLGSSQVASRVLAMKGLSLVLSEGSLRDGEEKEPPMEEDVGDTDVLQGYQWLLRDLPRLPLFDSVRSTTALALQQAIHMETDPQTISAYLIYLSQHTPVEEQAQHSDLALDVARLVVERSTIMSHLFSKLSPSAASDAVLSALLSIFSRYVRRMRQSKEGEEVYSWSESQDQVFLRWSSGETATMHILVVHAMVILLTLGPPRADDSEFQALLDIWFPEEKPLPTAFLVDTSEEALLLPDWLKLRMIRSEVLRLVDAALQDLEPQQLLLFVQSFGIPVSSMSKLLQFLDQAVAHDPQTLEQNIMDKNYMAHLVEVQHERGASGGQTFHSLLTASLPPRRDSTEAPKPKSSPEQPIGQGRIRVGTQLRVLGPEDDLAGMFLQIFPLSPDPRWQSSSPRPVALALQQALGQELARVVQGSPEVPGITVRVLQALATLLSSPHGGALVMSMHRSHFLACPLLRQLCQYQRCVPQDTGFSSLFLKVLLQMLQWLDSPGVEGGPLRAQLRMLASQASAGRRLSDVRGGLLRLAEALAFRQDLEVVSSTVRAVIATLRSGEQCSVEPDLISKVLQGLIEVRSPHLEELLTAFFSATADAASPFPACKPVVVVSSLLLQEEEPLAGGKPGADGGSLEAVRLGPSSGLLVDWLEMLDPEVVSSCPDLQLRLLFSRRKGKGQAQVPSFRPYLLTLFTHQSSWPTLHQCIRVLLGKSREQRFDPSASLDFLWACIHVPRIWQGRDQRTPQKRREELVLRVQGPELISLVELILAEAETRSQDGDTAACSLIQARLPLLLSCCCGDDESVRKVTEHLSGCIQQWGDSVLGRRCRDLLLQLYLQRPELRVPVPEVLLHSEGAASSSVCKLDGLIHRFITLLADTSDSRALENRGADASMACRKLAVAHPLLLLRHLPMIAALLHGRTHLNFQEFRQQNHLSCFLHVLGLLELLQPHVFRSEHQGALWDCLLSFIRLLLNYRKSSRHLAAFINKFVQFIHKYITYNAPAAISFLQKHADPLHDLSFDNSDLVMLKSLLAGLSLPSRDDRTDRGLDEEGEEESSAGSLPLVSVSLFTPLTAAEMAPYMKRLSRGQTVEDLLEVLSDIDEMSRRRPEILSFFSTNLQRLMSSAEECCRNLAFSLALRSMQNSPSIAAAFLPTFMYCLGSQDFEVVQTALRNLPEYALLCQEHAAVLLHRAFLVGMYGQMDPSAQISEALRILHMEAVM.

The tract at residues 1–61 (MNRAKPTTVR…GLPSERKRDA (61 aa)) is disordered. S13 carries the phosphoserine modification. The segment covering 34-44 (GQANESKTAST) has biased composition (polar residues). At K47 the chain carries N6-acetyllysine. Position 83 is a phosphothreonine (T83). Phosphoserine is present on residues S87, S307, and S924. Residues 922-945 (AASGEEDDEGESKEQKAKKRQRQQ) form a disordered region. Acidic residues predominate over residues 923-932 (ASGEEDDEGE). Residues 1159 to 1179 (TATMHILVVHAMVILLTLGPP) traverse the membrane as a helical segment. Positions 1311 to 1334 (SLPPRRDSTEAPKPKSSPEQPIGQ) are disordered. The segment covering 1314–1323 (PRRDSTEAPK) has biased composition (basic and acidic residues). A phosphoserine mark is found at S1318, S1326, S1327, and S1395.

It belongs to the Integrator subunit 1 family. In terms of assembly, component of the Integrator complex, composed of core subunits INTS1, INTS2, INTS3, INTS4, INTS5, INTS6, INTS7, INTS8, INTS9/RC74, INTS10, INTS11/CPSF3L, INTS12, INTS13, INTS14 and INTS15. The core complex associates with protein phosphatase 2A subunits PPP2CA and PPP2R1A, to form the Integrator-PP2A (INTAC) complex. Interacts with ESRRB, ESRRB is not a core component of the Integrator complex and this association is a bridge for the interaction with the multiprotein complex Integrator; attracts the transcriptional machinery.

Its subcellular location is the nucleus. It is found in the nucleus membrane. Its function is as follows. Component of the integrator complex, a multiprotein complex that terminates RNA polymerase II (Pol II) transcription in the promoter-proximal region of genes. The integrator complex provides a quality checkpoint during transcription elongation by driving premature transcription termination of transcripts that are unfavorably configured for transcriptional elongation: the complex terminates transcription by (1) catalyzing dephosphorylation of the C-terminal domain (CTD) of Pol II subunit POLR2A/RPB1 and SUPT5H/SPT5, (2) degrading the exiting nascent RNA transcript via endonuclease activity and (3) promoting the release of Pol II from bound DNA. The integrator complex is also involved in terminating the synthesis of non-coding Pol II transcripts, such as enhancer RNAs (eRNAs), small nuclear RNAs (snRNAs), telomerase RNAs and long non-coding RNAs (lncRNAs). Within the integrator complex, INTS1 is involved in the post-termination step: INTS1 displaces INTS3 and the SOSS factors, allowing the integrator complex to return to the closed conformation, ready to bind to the paused elongation complex for another termination cycle. Mediates recruitment of cytoplasmic dynein to the nuclear envelope, probably as component of the integrator complex. This Homo sapiens (Human) protein is Integrator complex subunit 1.